Consider the following 231-residue polypeptide: 7-cyano-7-deazaguanine synthase (231 aa).

8 to 18 (FSGGQDSTTCL) provides a ligand contact to ATP. Zn(2+) is bound by residues C188, C197, C200, and C203.

This sequence belongs to the QueC family. The cofactor is Zn(2+).

The enzyme catalyses 7-carboxy-7-deazaguanine + NH4(+) + ATP = 7-cyano-7-deazaguanine + ADP + phosphate + H2O + H(+). Its pathway is purine metabolism; 7-cyano-7-deazaguanine biosynthesis. In terms of biological role, catalyzes the ATP-dependent conversion of 7-carboxy-7-deazaguanine (CDG) to 7-cyano-7-deazaguanine (preQ(0)). This chain is 7-cyano-7-deazaguanine synthase, found in Pectobacterium carotovorum subsp. carotovorum (strain PC1).